The primary structure comprises 313 residues: Undecaprenyl-diphosphatase (313 aa).

6 consecutive transmembrane segments (helical) span residues Tyr-121 to Phe-141, Leu-152 to Tyr-172, Gly-187 to Ala-207, Phe-225 to Ala-245, Gln-259 to Leu-279, and Phe-290 to Ile-310.

Belongs to the UppP family.

The protein resides in the cell membrane. The catalysed reaction is di-trans,octa-cis-undecaprenyl diphosphate + H2O = di-trans,octa-cis-undecaprenyl phosphate + phosphate + H(+). Its function is as follows. Catalyzes the dephosphorylation of undecaprenyl diphosphate (UPP). Confers resistance to bacitracin. The chain is Undecaprenyl-diphosphatase from Nocardia farcinica (strain IFM 10152).